The sequence spans 261 residues: Calcium-binding protein 8 (261 aa).

Residues 1 to 39 (MRLPEQPGEGKPENEKKGDGGALGGGEEPPRSQAPDFPT) are disordered. Residues 1–234 (MRLPEQPGEG…QNRQTCVRKS (234 aa)) are Cytoplasmic-facing. Positions 8 to 19 (GEGKPENEKKGD) are enriched in basic and acidic residues. EF-hand domains lie at 78–113 (EELD…LGYM) and 114–149 (PSEV…KLVS). The Ca(2+) site is built by Asp91, Asp93, Asn95, Glu102, Asp127, Asp129, Asp131, Gln133, and Glu138. Residues 235–255 (LICAFAMAFIISVMLIAANQI) traverse the membrane as a helical; Anchor for type IV membrane protein segment. Over 256–261 (LRSGME) the chain is Extracellular.

In terms of assembly, interacts with PI4KB. This binding competes with FREQ/NCS1 binding in a calcium-dependent manner. As to expression, brain specific.

It localises to the golgi apparatus. It is found in the trans-Golgi network membrane. The protein localises to the cytoplasm. The protein resides in the perinuclear region. Its subcellular location is the cell membrane. Functionally, negatively regulates Golgi-to-plasma membrane trafficking by interacting with PI4KB and inhibiting its activity. May play a role in the physiology of neurons and is potentially important in memory and learning. The protein is Calcium-binding protein 8 (CALN1) of Homo sapiens (Human).